The primary structure comprises 342 residues: RNA 3'-terminal phosphate cyclase (342 aa).

ATP-binding positions include glutamine 103 and 283 to 287 (YLADQ). Histidine 308 (tele-AMP-histidine intermediate) is an active-site residue.

It belongs to the RNA 3'-terminal cyclase family. Type 1 subfamily.

The protein localises to the cytoplasm. The enzyme catalyses a 3'-end 3'-phospho-ribonucleotide-RNA + ATP = a 3'-end 2',3'-cyclophospho-ribonucleotide-RNA + AMP + diphosphate. Functionally, catalyzes the conversion of 3'-phosphate to a 2',3'-cyclic phosphodiester at the end of RNA. The mechanism of action of the enzyme occurs in 3 steps: (A) adenylation of the enzyme by ATP; (B) transfer of adenylate to an RNA-N3'P to produce RNA-N3'PP5'A; (C) and attack of the adjacent 2'-hydroxyl on the 3'-phosphorus in the diester linkage to produce the cyclic end product. The biological role of this enzyme is unknown but it is likely to function in some aspects of cellular RNA processing. The polypeptide is RNA 3'-terminal phosphate cyclase (Shigella dysenteriae serotype 1 (strain Sd197)).